Reading from the N-terminus, the 449-residue chain is UDP-N-acetylglucosamine 1-carboxyvinyltransferase (449 aa).

Phosphoenolpyruvate is bound at residue 51-52; that stretch reads KN. Residue Arg121 participates in UDP-N-acetyl-alpha-D-glucosamine binding. The Proton donor role is filled by Cys145. At Cys145 the chain carries 2-(S-cysteinyl)pyruvic acid O-phosphothioketal. Residues 150–154, Asp333, and Ile355 each bind UDP-N-acetyl-alpha-D-glucosamine; that span reads RPVDQ.

This sequence belongs to the EPSP synthase family. MurA subfamily.

Its subcellular location is the cytoplasm. The enzyme catalyses phosphoenolpyruvate + UDP-N-acetyl-alpha-D-glucosamine = UDP-N-acetyl-3-O-(1-carboxyvinyl)-alpha-D-glucosamine + phosphate. Its pathway is cell wall biogenesis; peptidoglycan biosynthesis. Functionally, cell wall formation. Adds enolpyruvyl to UDP-N-acetylglucosamine. The protein is UDP-N-acetylglucosamine 1-carboxyvinyltransferase of Burkholderia lata (strain ATCC 17760 / DSM 23089 / LMG 22485 / NCIMB 9086 / R18194 / 383).